The following is a 66-amino-acid chain: MANGKDVRIRVILECTSCVRKSVNKKSIGISRYITQKNRHNRPSRLELRKFCPYCYKHTIHGEIKK.

The protein belongs to the bacterial ribosomal protein bL33 family.

The protein resides in the plastid. It is found in the chloroplast. This Populus alba (White poplar) protein is Large ribosomal subunit protein bL33c.